We begin with the raw amino-acid sequence, 120 residues long: Large ribosomal subunit protein uL18 (120 aa).

The segment covering Met1–Arg10 has biased composition (basic and acidic residues). Residues Met1–Arg26 are disordered. Residues Ser11–Val20 are compositionally biased toward basic residues.

Belongs to the universal ribosomal protein uL18 family. As to quaternary structure, part of the 50S ribosomal subunit; part of the 5S rRNA/L5/L18/L25 subcomplex. Contacts the 5S and 23S rRNAs.

In terms of biological role, this is one of the proteins that bind and probably mediate the attachment of the 5S RNA into the large ribosomal subunit, where it forms part of the central protuberance. The chain is Large ribosomal subunit protein uL18 from Cyanothece sp. (strain PCC 7425 / ATCC 29141).